Here is a 668-residue protein sequence, read N- to C-terminus: Packaging protein UL32 homolog (668 aa).

Residues 1–10 (MNPSTHVSSN) are compositionally biased toward polar residues. The segment at 1–35 (MNPSTHVSSNGPTTPPHGPHTTFLPPTSPAPSTSS) is disordered. The span at 19–35 (PHTTFLPPTSPAPSTSS) shows a compositional bias: low complexity. Zn(2+) contacts are provided by Cys-200, Cys-203, His-276, and Cys-282. A zinc finger 1 region spans residues 200 to 282 (CNLCAIISIC…FHLHFFINRC (83 aa)). Residues 401–430 (IEEEEDEEGGEKGGDDPGRHNGGGTSGGFS) are disordered. Residues 410–419 (GEKGGDDPGR) are compositionally biased toward basic and acidic residues. Zn(2+) is bound by residues Cys-459, Cys-462, His-567, and Cys-574. Residues 459 to 574 (CLLCELMACS…YKHFFCDPQC (116 aa)) are zinc finger 2.

This sequence belongs to the herpesviridae UL32 protein family.

It localises to the host cytoplasm. It is found in the host nucleus. In terms of biological role, plays a role in efficient localization of neo-synthesized capsids to nuclear replication compartments, thereby controlling cleavage and packaging of virus genomic DNA. This is Packaging protein UL32 homolog (UL52) from Homo sapiens (Human).